The primary structure comprises 1801 residues: MEWASGKPGRGRQGQPVPWELRLGLLLSVLAATLAQVPSLDVPGCSRGSCYPATGDLLVGRADRLTASSTCGLHSPQPYCIVSHLQDEKKCFLCDSRRPFSARDNPNSHRIQNVVTSFAPQRRTAWWQSENGVPMVTIQLDLEAEFHFTHLIMTFKTFRPAAMLVERSADFGRTWRVYRYFSYDCGADFPGIPLAPPRRWDDVVCESRYSEIEPSTEGEVIYRVLDPAIPIPDPYSSRIQNLLKITNLRVNLTRLHTLGDNLLDPRREIREKYYYALYELVIRGNCFCYGHASQCAPAPGAPAHAEGMVHGACICKHNTRGLNCEQCQDFYQDLPWHPAEDGHTHACRKCECNGHSHSCHFDMAVYLASGNVSGGVCDGCQHNTAGRHCELCRPFFYRDPTKDMRDPAACRPCDCDPMGSQDGGRCDSHDDPVLGLVSGQCRCKEHVVGTRCQQCRDGFFGLSASNPRGCQRCQCNSRGTVPGGTPCDSSSGTCFCKRLVTGDGCDRCLPGHWGLSHDLLGCRPCDCDVGGALDPQCDEATGQCPCRPHMIGRRCEQVQPGYFRPFLDHLTWEAEGAHGQVLEVVERLVTNRETPSWTGVGFVRLREGQEVEFLVTSLPRAMDYDLLLRWEPQVPEQWAELELVVQRPGPVSAHSPCGHVLPRDDRIQGMLHPNTRVLVFPRPVCLEPGLSYKLKLKLTGTGGRAHPETPYSGSGILIDSLVLQPHVLMLEMFSGGDAAALERRTTFERYRCHEEGLMPSKTPLSEACVPLLISASSLVYNGALPCQCDPQGSLSSECNPHGGQCRCKPGVVGRRCDACATGYYGFGPAGCQACQCSPDGALSALCEGTSGQCLCRTGAFGLRCDHCQRGQWGFPNCRPCVCNGRADECDAHTGACLGCRDYTGGEHCERCIAGFHGDPRLPYGGQCRPCPCPEGPGSQRHFATSCHRDGYSQQIVCHCRAGYTGLRCEACAPGHFGDPSKPGGRCQLCECSGNIDPTDPGACDPHTGQCLRCLHHTEGPHCGHCKPGFHGQAARQSCHRCTCNLLGTDPQRCPSTDLCHCDPSTGQCPCLPHVQGLSCDRCAPNFWNFTSGRGCQPCACHPSRARGPTCNEFTGQCHCHAGFGGRTCSECQELHWGDPGLQCRACDCDPRGIDKPQCHRSTGHCSCRPGVSGVRCDQCARGFSGVFPACHPCHACFGDWDRVVQDLAARTRRLEQWAQELQQTGVLGAFESSFLNLQGKLGMVQAIVAARNTSAASTAKLVEATEGLRHEIGKTTERLTQLEAELTDVQDENFNANHALSGLERDGLALNLTLRQLDQHLDILKHSNFLGAYDSIRHAHSQSTEAERRANASTFAIPSPVSNSADTRRRAEVLMGAQRENFNRQHLANQQALGRLSTHTHTLSLTGVNELVCGAPGDAPCATSPCGGAGCRDEDGQPRCGGLGCSGAAATADLALGRARHTQAELQRALVEGGGILSRVSETRRQAEEAQQRAQAALDKANASRGQVEQANQELRELIQNVKDFLSQEGADPDSIEMVATRVLDISIPASPEQIQRLASEIAERVRSLADVDTILAHTMGDVRRAEQLLQDAQRARSRAEGERQKAETVQAALEEAQRAQGAAQGAIRGAVVDTKNTEQTLQQVQERMAGTEQSLNSASERARQLHALLEALKLKRAGNSLAASTAEETAGSAQSRAREAEKQLREQVGDQYQTVRALAERKAEGVLAAQARAEQLRDEARGLLQAAQDKLQRLQELEGTYEENERELEVKAAQLDGLEARMRSVLQAINLQVQIYNTCQ.

Positions 1-35 (MEWASGKPGRGRQGQPVPWELRLGLLLSVLAATLA) are cleaved as a signal peptide. In terms of domain architecture, Laminin N-terminal spans 46 to 285 (SRGSCYPATG…ALYELVIRGN (240 aa)). An N-linked (GlcNAc...) asparagine glycan is attached at N251. 19 disulfide bridges follow: C286/C295, C288/C313, C315/C324, C327/C347, C350/C359, C352/C377, C380/C389, C392/C410, C413/C426, C415/C441, C443/C452, C455/C470, C473/C487, C475/C494, C496/C505, C508/C522, C525/C537, C527/C544, and C546/C555. Laminin EGF-like domains are found at residues 286–349 (CFCY…ACRK), 350–412 (CECN…ACRP), 413–472 (CDCD…GCQR), and 473–524 (CQCN…GCRP). N-linked (GlcNAc...) asparagine glycosylation occurs at N371. The Laminin EGF-like 5; truncated domain maps to 525–555 (CDCDVGGALDPQCDEATGQCPCRPHMIGRRC). In terms of domain architecture, Laminin IV type B spans 564 to 780 (RPFLDHLTWE…LLISASSLVY (217 aa)). Intrachain disulfides connect C786–C798, C788–C805, C807–C816, C819–C831, C834–C846, C836–C853, C855–C864, C867–C877, C880–C889, C882–C896, C899–C908, C911–C927, C930–C946, C932–C957, C959–C968, C971–C986, C989–C1003, C991–C1010, C1013–C1022, C1025–C1038, C1041–C1061, C1043–C1068, C1070–C1079, C1082–C1095, C1098–C1110, C1100–C1117, C1119–C1128, C1131–C1143, C1146–C1158, C1148–C1165, C1167–C1176, and C1179–C1190. 8 Laminin EGF-like domains span residues 786-833 (CQCD…GCQA), 834-879 (CQCS…NCRP), 880-929 (CVCN…QCRP), 930-988 (CPCP…RCQL), 989-1040 (CECS…SCHR), 1041-1097 (CTCN…GCQP), 1098-1145 (CACH…QCRA), and 1146-1192 (CDCD…ACHP). N-linked (GlcNAc...) asparagine glycosylation occurs at N1088. The interval 1193 to 1412 (CHACFGDWDR…LSLTGVNELV (220 aa)) is domain II. An N-linked (GlcNAc...) asparagine glycan is attached at N1252. Residues 1259-1306 (AKLVEATEGLRHEIGKTTERLTQLEAELTDVQDENFNANHALSGLERD) are a coiled coil. Residues N1311 and N1351 are each glycosylated (N-linked (GlcNAc...) asparagine). The segment at 1413 to 1445 (CGAPGDAPCATSPCGGAGCRDEDGQPRCGGLGC) is domain alpha. Positions 1446 to 1801 (SGAAATADLA…LQVQIYNTCQ (356 aa)) are domain I. Positions 1475-1529 (GILSRVSETRRQAEEAQQRAQAALDKANASRGQVEQANQELRELIQNVKDFLSQE) form a coiled coil. A glycan (N-linked (GlcNAc...) asparagine) is linked at N1502. S1535 bears the Phosphoserine mark. Residues 1576-1793 (LAHTMGDVRR…RSVLQAINLQ (218 aa)) are a coiled coil. Residues 1684–1694 (ASTAEETAGSA) show a composition bias toward low complexity. The disordered stretch occupies residues 1684–1703 (ASTAEETAGSAQSRAREAEK).

Laminin is a complex glycoprotein, consisting of three different polypeptide chains (alpha, beta, gamma), which are bound to each other by disulfide bonds into a cross-shaped molecule comprising one long and three short arms with globules at each end. Beta-2 is a subunit of laminin-3 (laminin-121 or S-laminin), laminin-4 (laminin-221 or S-merosin), laminin-7 (laminin-321 or KS-laminin), laminin-9 (laminin-421), laminin-11 (laminin-521), laminin-14 (laminin-423) and laminin-15 (laminin-523). As to expression, found in the basement membranes (major component). S-laminin is concentrated in the synaptic cleft of the neuromuscular junction.

The protein localises to the secreted. Its subcellular location is the extracellular space. It localises to the extracellular matrix. It is found in the basement membrane. Its function is as follows. Binding to cells via a high affinity receptor, laminin is thought to mediate the attachment, migration and organization of cells into tissues during embryonic development by interacting with other extracellular matrix components. The polypeptide is Laminin subunit beta-2 (Lamb2) (Rattus norvegicus (Rat)).